A 123-amino-acid polypeptide reads, in one-letter code: MPTINQLIRIGRKSKKEKSNSPALKSCPQKRGVCTRVYTTTPKKPNSALRKVARVRLTNGIEVSSYIPGVGHNLQEHSVVLIRGGRVKDLPGVRYHIVRGTLDSVGVKDRKQARSKYGAKRPK.

At Asp89 the chain carries 3-methylthioaspartic acid.

It belongs to the universal ribosomal protein uS12 family. Part of the 30S ribosomal subunit. Contacts proteins S8 and S17. May interact with IF1 in the 30S initiation complex.

Functionally, with S4 and S5 plays an important role in translational accuracy. Interacts with and stabilizes bases of the 16S rRNA that are involved in tRNA selection in the A site and with the mRNA backbone. Located at the interface of the 30S and 50S subunits, it traverses the body of the 30S subunit contacting proteins on the other side and probably holding the rRNA structure together. The combined cluster of proteins S8, S12 and S17 appears to hold together the shoulder and platform of the 30S subunit. This Geobacter metallireducens (strain ATCC 53774 / DSM 7210 / GS-15) protein is Small ribosomal subunit protein uS12.